The sequence spans 132 residues: Protein MrkF (132 aa).

It is found in the fimbrium. Functionally, appears to affect the stability of the intact fimbriae on the cell surface. This is Protein MrkF (mrkF) from Klebsiella pneumoniae.